Reading from the N-terminus, the 155-residue chain is Small ribosomal subunit protein uS7 (155 aa).

Belongs to the universal ribosomal protein uS7 family. Part of the 30S ribosomal subunit. Contacts proteins S9 and S11.

In terms of biological role, one of the primary rRNA binding proteins, it binds directly to 16S rRNA where it nucleates assembly of the head domain of the 30S subunit. Is located at the subunit interface close to the decoding center, probably blocks exit of the E-site tRNA. The polypeptide is Small ribosomal subunit protein uS7 (Mycoplasmoides gallisepticum (strain R(low / passage 15 / clone 2)) (Mycoplasma gallisepticum)).